The primary structure comprises 134 residues: Large-conductance mechanosensitive channel (134 aa).

Helical transmembrane passes span 16–36 (VIDL…VTAL) and 81–101 (GDFI…FIIV).

The protein belongs to the MscL family. Homopentamer.

It is found in the cell inner membrane. Functionally, channel that opens in response to stretch forces in the membrane lipid bilayer. May participate in the regulation of osmotic pressure changes within the cell. This chain is Large-conductance mechanosensitive channel, found in Xylella fastidiosa (strain Temecula1 / ATCC 700964).